A 301-amino-acid chain; its full sequence is Type II restriction enzyme BslI subunit beta (301 aa).

A CHC2-type zinc finger spans residues 62–82; the sequence is CPDGHTKWNQNLTKEMTCSEC.

Heterotetramer of two alpha and two beta subunits. The alpha subunit is believed to be responsible for DNA recognition, while the beta subunit is thought to mediate cleavage. Zn(2+) is required as a cofactor.

It carries out the reaction Endonucleolytic cleavage of DNA to give specific double-stranded fragments with terminal 5'-phosphates.. In terms of biological role, a P subtype restriction enzyme that recognizes the double-stranded sequence 5'-CCN(7)GG-3' and cleaves after N-7. The sequence is that of Type II restriction enzyme BslI subunit beta from Bacillus sp. (strain NEB-606).